Consider the following 200-residue polypeptide: Cell division protein SepF (200 aa).

Disordered regions lie at residues 35 to 60 (NLYQQENPQPPAPQESATAQNRRWRE) and 170 to 200 (LHEVPQPPARPSRPTGSPNQTWGNETNRMAQ). A compositionally biased stretch (polar residues) spans 183–200 (PTGSPNQTWGNETNRMAQ).

Belongs to the SepF family. Homodimer. Interacts with FtsZ.

The protein localises to the cytoplasm. In terms of biological role, cell division protein that is part of the divisome complex and is recruited early to the Z-ring. Probably stimulates Z-ring formation, perhaps through the cross-linking of FtsZ protofilaments. Its function overlaps with FtsA. The sequence is that of Cell division protein SepF from Nostoc punctiforme (strain ATCC 29133 / PCC 73102).